A 376-amino-acid chain; its full sequence is Succinyl-diaminopimelate desuccinylase (376 aa).

His66 provides a ligand contact to Zn(2+). Asp68 is an active-site residue. Asp99 is a Zn(2+) binding site. The active-site Proton acceptor is the Glu133. Glu134, Glu162, and His348 together coordinate Zn(2+).

This sequence belongs to the peptidase M20A family. DapE subfamily. In terms of assembly, homodimer. Zn(2+) is required as a cofactor. The cofactor is Co(2+).

The catalysed reaction is N-succinyl-(2S,6S)-2,6-diaminopimelate + H2O = (2S,6S)-2,6-diaminopimelate + succinate. It participates in amino-acid biosynthesis; L-lysine biosynthesis via DAP pathway; LL-2,6-diaminopimelate from (S)-tetrahydrodipicolinate (succinylase route): step 3/3. Its function is as follows. Catalyzes the hydrolysis of N-succinyl-L,L-diaminopimelic acid (SDAP), forming succinate and LL-2,6-diaminopimelate (DAP), an intermediate involved in the bacterial biosynthesis of lysine and meso-diaminopimelic acid, an essential component of bacterial cell walls. The sequence is that of Succinyl-diaminopimelate desuccinylase from Thioalkalivibrio sulfidiphilus (strain HL-EbGR7).